The following is a 397-amino-acid chain: Na(+)/H(+) antiporter NhaA 2 (397 aa).

Transmembrane regions (helical) follow at residues 9–29 (LHNPAASGILIFLAAVAAMAV), 59–79 (LLLWINDGLMAVFFLLVGLEL), 95–115 (ILPVVGAVGGIALPAAIYTLI), 125–145 (GWAIPTATDIAFALGILALLG), 154–174 (LFLLTLAIIDDLAAILIIAFF), 177–197 (SELSPASLMIAGSAIGTLILM), 222–242 (SGVHATLAGVVLGFVIPLKGE), 260–280 (VVGLGILPLFAFANAGVSLQG), 292–312 (LGIALGLFLGKQIGVFGFVWL), 332–352 (GVALLCGVGFTMSLFISSLAF), and 371–391 (LGILTGSILSGIFGYILLRFS).

Belongs to the NhaA Na(+)/H(+) (TC 2.A.33) antiporter family.

The protein localises to the cell inner membrane. It carries out the reaction Na(+)(in) + 2 H(+)(out) = Na(+)(out) + 2 H(+)(in). Its function is as follows. Na(+)/H(+) antiporter that extrudes sodium in exchange for external protons. The sequence is that of Na(+)/H(+) antiporter NhaA 2 from Magnetococcus marinus (strain ATCC BAA-1437 / JCM 17883 / MC-1).